The following is a 46-amino-acid chain: Esculentin-1a/b (46 aa).

Cysteines 40 and 46 form a disulfide.

Belongs to the frog skin active peptide (FSAP) family. Esculentin subfamily. As to expression, expressed by the skin glands.

The protein resides in the secreted. In terms of biological role, antimicrobial peptide. Stimulates insulin secretion by BRIN-BD11 cells in vitro. Shows hemolytic activity. The chain is Esculentin-1a/b from Pelophylax ridibundus (Marsh frog).